We begin with the raw amino-acid sequence, 182 residues long: Large ribosomal subunit protein uL16 (182 aa).

This sequence belongs to the universal ribosomal protein uL16 family.

The polypeptide is Large ribosomal subunit protein uL16 (Pyrobaculum neutrophilum (strain DSM 2338 / JCM 9278 / NBRC 100436 / V24Sta) (Thermoproteus neutrophilus)).